The following is a 128-amino-acid chain: Large ribosomal subunit protein bL17 (128 aa).

This sequence belongs to the bacterial ribosomal protein bL17 family. In terms of assembly, part of the 50S ribosomal subunit. Contacts protein L32.

This is Large ribosomal subunit protein bL17 from Streptococcus pneumoniae serotype 2 (strain D39 / NCTC 7466).